We begin with the raw amino-acid sequence, 324 residues long: Olfactory receptor 5T17 (324 aa).

Residues 1 to 37 are Extracellular-facing; it reads MPRTPSYTNTKTTQVNNVTEITVFILLGFTDDVDMNI. The N-linked (GlcNAc...) asparagine glycan is linked to Asn-17. A helical transmembrane segment spans residues 38-58; the sequence is FLFILFLAIYVVTLIGNLGLV. The Cytoplasmic segment spans residues 59 to 66; sequence VLVIEDSR. A helical membrane pass occupies residues 67–87; sequence LHNPMYYFLTVLSSLDACFSS. Residues 88 to 111 are Extracellular-facing; sequence VLTPKMLVNFLSKNKSISFAGCAT. N-linked (GlcNAc...) asparagine glycosylation occurs at Asn-101. A disulfide bridge connects residues Cys-109 and Cys-201. A helical membrane pass occupies residues 112-132; that stretch reads QMLLFVTFGTTECFLLAAMAY. Over 133–145 the chain is Cytoplasmic; that stretch reads DRYLAIYSPLLYA. Residues 146–166 form a helical membrane-spanning segment; sequence VRMSPRVYVPLIIASYTGGIL. Residues 167-208 are Extracellular-facing; it reads HATIHTVATFSLSFCGSNEIRHVFCDIPPLLALSCSDTHLNQ. The chain crosses the membrane as a helical span at residues 209–229; it reads LLLFYCAGSIELITILIVLVS. Over 230–249 the chain is Cytoplasmic; it reads YGFVLLAILKINSAEGRRKI. The chain crosses the membrane as a helical span at residues 250–270; that stretch reads FSTCGAHLTGVSIFHGTILFM. Residues 271–283 are Extracellular-facing; that stretch reads YVRPSSNYTLEQD. A glycan (N-linked (GlcNAc...) asparagine) is linked at Asn-277. A helical transmembrane segment spans residues 284 to 304; sequence MVVSTFYTIVIPMLNPIIYSL. Over 305 to 324 the chain is Cytoplasmic; the sequence is RNKDVKEAMRKLLKRKLVHE.

Belongs to the G-protein coupled receptor 1 family.

It is found in the cell membrane. In terms of biological role, potential odorant receptor. The sequence is that of Olfactory receptor 5T17 from Mus musculus (Mouse).